Consider the following 284-residue polypeptide: Efem/EfeO family lipoprotein (284 aa).

The N-terminal stretch at 1 to 17 (MKKLTTLLLASTLLIAA) is a signal peptide. Residue Cys18 is the site of N-palmitoyl cysteine attachment. Cys18 carries the S-diacylglycerol cysteine lipid modification.

The protein belongs to the EfeM/EfeO family.

The protein localises to the cell membrane. This Staphylococcus aureus (strain MRSA252) protein is Efem/EfeO family lipoprotein.